We begin with the raw amino-acid sequence, 536 residues long: Glucan 1,6-alpha-glucosidase (536 aa).

The active-site Nucleophile is the aspartate 194. Catalysis depends on glutamate 236, which acts as the Proton donor.

Belongs to the glycosyl hydrolase 13 family.

Its subcellular location is the cytoplasm. The enzyme catalyses Hydrolysis of (1-&gt;6)-alpha-D-glucosidic linkages in (1-&gt;6)-alpha-D-glucans and derived oligosaccharides.. The physiological substrates may be short isomaltosaccharides. The chain is Glucan 1,6-alpha-glucosidase (dexB) from Streptococcus mutans serotype c (strain ATCC 700610 / UA159).